We begin with the raw amino-acid sequence, 294 residues long: GTPase Era (294 aa).

The region spanning 3–170 is the Era-type G domain; sequence KSGFISIIGR…LELMIKYMPE (168 aa). The segment at 11–18 is G1; it reads GRPNVGKS. 11–18 serves as a coordination point for GTP; that stretch reads GRPNVGKS. Positions 37–41 are G2; sequence QTTRN. The segment at 58–61 is G3; the sequence is DTPG. Residues 58–62 and 120–123 each bind GTP; these read DTPGI and NKID. The G4 stretch occupies residues 120-123; sequence NKID. Residues 149 to 151 are G5; that stretch reads ISA. One can recognise a KH type-2 domain in the interval 201 to 278; the sequence is LSEEVPHGIA…NLKVWVKVKK (78 aa).

It belongs to the TRAFAC class TrmE-Era-EngA-EngB-Septin-like GTPase superfamily. Era GTPase family. In terms of assembly, monomer.

It is found in the cytoplasm. It localises to the cell membrane. An essential GTPase that binds both GDP and GTP, with rapid nucleotide exchange. Plays a role in 16S rRNA processing and 30S ribosomal subunit biogenesis and possibly also in cell cycle regulation and energy metabolism. This is GTPase Era from Clostridium novyi (strain NT).